The sequence spans 654 residues: Threonine--tRNA ligase (654 aa).

The TGS domain occupies 1-63 (MASINVKFPD…TTDGSIEIIA (63 aa)). The interval 248 to 546 (DHRVIGNELD…LTEIYKGAFP (299 aa)) is catalytic. Zn(2+)-binding residues include Cys-342, His-393, and His-523.

This sequence belongs to the class-II aminoacyl-tRNA synthetase family. As to quaternary structure, homodimer. It depends on Zn(2+) as a cofactor.

Its subcellular location is the cytoplasm. The catalysed reaction is tRNA(Thr) + L-threonine + ATP = L-threonyl-tRNA(Thr) + AMP + diphosphate + H(+). In terms of biological role, catalyzes the attachment of threonine to tRNA(Thr) in a two-step reaction: L-threonine is first activated by ATP to form Thr-AMP and then transferred to the acceptor end of tRNA(Thr). Also edits incorrectly charged L-seryl-tRNA(Thr). This is Threonine--tRNA ligase from Lactiplantibacillus plantarum (strain ATCC BAA-793 / NCIMB 8826 / WCFS1) (Lactobacillus plantarum).